A 235-amino-acid chain; its full sequence is Small capsomere-interacting protein (235 aa).

The segment at 104–235 (PRIIRPQPPN…SGNASRSRRV (132 aa)) is disordered. Residues 127–139 (PQKTQSADQSALQ) show a composition bias toward polar residues. Residues 158–188 (TTSASVGQQQHVVSGSSGQQPQQGAQSSTVQ) show a composition bias toward low complexity. The segment covering 220–235 (LSHTGQSGNASRSRRV) has biased composition (polar residues).

The protein belongs to the herpesviridae small capsomere-interacting protein family. As to quaternary structure, interacts with the major capsid protein/MCP.

It is found in the virion. It localises to the host nucleus. Its function is as follows. Participates in the assembly of the infectious particles by decorating the outer surface of the capsid shell and thus forming a layer between the capsid and the tegument. Complexes composed of the capsid protein VP5 and VP26 assemble together in the host cytoplasm and are translocated to the nucleus, where they accumulate and participate in capsid assembly. Functionally, participates in the assembly of the infectious particles by decorating the outer surface of the capsid shell and thus forming a layer between the capsid and the tegument. Complexes composed of the major capsid protein and small capsomere-interacting protein/SCP assemble together in the host cytoplasm and are translocated to the nucleus, where they accumulate and participate in capsid assembly. The chain is Small capsomere-interacting protein from Homo sapiens (Human).